A 344-amino-acid polypeptide reads, in one-letter code: C5a anaphylatoxin chemotactic receptor 2 (344 aa).

The Extracellular portion of the chain corresponds to 1 to 44; that stretch reads MMNHTTSEYYDYEYDHEHYSDLPDVPVDCPAGTCFTSDVYLIVL. N-linked (GlcNAc...) asparagine glycosylation occurs at Asn-3. A helical transmembrane segment spans residues 45 to 67; it reads LVLYAAVFLVGVPGNTLVAWVTW. Topologically, residues 68 to 78 are cytoplasmic; that stretch reads KESRHRLGASW. The helical transmembrane segment at 79-101 threads the bilayer; it reads FLHLTMADLLCCVSLPFLAVPIA. The Extracellular segment spans residues 102–120; the sequence is QKGHWPYGAAGCWLLSSIT. Cys-113 and Cys-192 form a disulfide bridge. A helical membrane pass occupies residues 121–143; it reads ILSMYASVLLLTGLSGDLFLLAF. The Cytoplasmic segment spans residues 144–155; the sequence is RPSWKGADHRTF. A helical membrane pass occupies residues 156 to 178; that stretch reads GVRVVQASSWMLGLLLTVPSAVY. Topologically, residues 179 to 208 are extracellular; it reads RRLLQEHYPPRLVCGIDYGGSVSAEVAITT. A helical membrane pass occupies residues 209-231; sequence VRFLFGFLGPLVFMAGCHGILQR. The Cytoplasmic segment spans residues 232-243; sequence QMARRHWPLGTA. The helical transmembrane segment at 244 to 266 threads the bilayer; that stretch reads VVVGFFICWTPYHVLRVIIAAAP. Residues 267–280 lie on the Extracellular side of the membrane; sequence PHSLLLARVLEAEP. The helical transmembrane segment at 281–300 threads the bilayer; that stretch reads LFNGLALAHSALNPIMFLYF. Residues 301-344 lie on the Cytoplasmic side of the membrane; sequence GRKQLCKSLQAACHWALRDPQDEESAVTKVSISTSHEMVSEMPV. Ser-325 is modified (phosphoserine).

Belongs to the G-protein coupled receptor 1 family. In terms of assembly, interacts with C3 (the anaphylatoxin peptide C3a and the adipogenic hormone ASP); the interaction occurs with higher affinity for ASP, enhancing the phosphorylation and activation of GPR77, recruitment of ARRB2 to the cell surface and endocytosis of GRP77. In terms of tissue distribution, highly expressed in liver and spleen. Lower levels in intestine, brain and kidney. Also expressed in adipose tissues with highest levels in gonadal and ingual fat depots. Lower levels in brown tissue.

Its subcellular location is the cell membrane. Its function is as follows. Receptor for the chemotactic and inflammatory C3a, C4a and C5a anaphylatoxin peptides and also for their dearginated forms ASP/C3adesArg, C4adesArg and C5adesArg respectively. Couples weakly to G(i)-mediated signaling pathways. In Mus musculus (Mouse), this protein is C5a anaphylatoxin chemotactic receptor 2 (C5ar2).